An 860-amino-acid polypeptide reads, in one-letter code: Glucans biosynthesis glucosyltransferase H (860 aa).

6 consecutive transmembrane segments (helical) span residues 146–166 (ILLI…KGIL), 200–220 (ILLL…TALM), 519–539 (VFLT…FLVL), 576–596 (LFST…ILIW), 610–630 (TVSM…RMLF), and 686–706 (FLWW…VSVI).

This sequence belongs to the glycosyltransferase 2 family. OpgH subfamily.

It is found in the cell inner membrane. It functions in the pathway glycan metabolism; osmoregulated periplasmic glucan (OPG) biosynthesis. Functionally, involved in the biosynthesis of osmoregulated periplasmic glucans (OPGs). The polypeptide is Glucans biosynthesis glucosyltransferase H (Pseudomonas savastanoi pv. phaseolicola (strain 1448A / Race 6) (Pseudomonas syringae pv. phaseolicola (strain 1448A / Race 6))).